The sequence spans 520 residues: Amine oxidase [flavin-containing] B (520 aa).

The residue at position 2 (serine 2) is an N-acetylserine. Residues 2 to 489 (SNKCDVVVVG…TFLERHLPSV (488 aa)) lie on the Cytoplasmic side of the membrane. The residue at position 52 (lysine 52) is an N6-acetyllysine. At cysteine 397 the chain carries S-8alpha-FAD cysteine. A helical; Anchor for type IV membrane protein membrane pass occupies residues 490–516 (PGLLRLIGLTTIFSATALGFLAHKRGL). At 517-520 (LVRV) the chain is on the mitochondrial intermembrane side.

In terms of assembly, monomer, homo- or heterodimer (containing two subunits of similar size). Each subunit contains a covalently bound flavin. Enzymatically active as monomer. FAD is required as a cofactor.

It is found in the mitochondrion outer membrane. It carries out the reaction a secondary aliphatic amine + O2 + H2O = a primary amine + an aldehyde + H2O2. The catalysed reaction is (R)-adrenaline + O2 + H2O = (R)-3,4-dihydroxymandelaldehyde + methylamine + H2O2. It catalyses the reaction a primary methyl amine + O2 + H2O = an aldehyde + H2O2 + NH4(+). The enzyme catalyses benzylamine + O2 + H2O = benzaldehyde + H2O2 + NH4(+). It carries out the reaction dopamine + O2 + H2O = 3,4-dihydroxyphenylacetaldehyde + H2O2 + NH4(+). The catalysed reaction is tyramine + O2 + H2O = (4-hydroxyphenyl)acetaldehyde + H2O2 + NH4(+). It catalyses the reaction (R)-noradrenaline + O2 + H2O = (R)-3,4-dihydroxymandelaldehyde + H2O2 + NH4(+). The enzyme catalyses 2-phenylethylamine + O2 + H2O = 2-phenylacetaldehyde + H2O2 + NH4(+). It carries out the reaction N-acetylputrescine + O2 + H2O = 4-acetamidobutanal + H2O2 + NH4(+). Inhibited by deprenyl. Functionally, catalyzes the oxidative deamination of primary and some secondary amines such as neurotransmitters, and exogenous amines including the tertiary amine, neurotoxin 1-methyl-4-phenyl-1,2,3,6-tetrahydropyridine (MPTP), with concomitant reduction of oxygen to hydrogen peroxide and participates in the metabolism of neuroactive and vasoactive amines in the central nervous system and peripheral tissues. Preferentially degrades benzylamine and phenylethylamine. The polypeptide is Amine oxidase [flavin-containing] B (Homo sapiens (Human)).